Reading from the N-terminus, the 799-residue chain is Disintegrin and metalloproteinase domain-containing protein B (799 aa).

A signal peptide spans M1–A23. Over R24–P707 the chain is Extracellular. N-linked (GlcNAc...) asparagine glycans are attached at residues N33, N227, N228, N314, and N408. The 240-residue stretch at K272 to T511 folds into the Peptidase M12B domain. Intrachain disulfides connect C396–C496, C449–C460, and C581–C601. H432 contacts Zn(2+). E433 is a catalytic residue. Positions 436 and 442 each coordinate Zn(2+). One can recognise a Disintegrin domain in the interval G520–D609. The chain crosses the membrane as a helical span at residues I708 to I728. Topologically, residues C729–A799 are cytoplasmic. Residues V753–A799 are disordered. Over residues N776–Y789 the composition is skewed to pro residues.

Zn(2+) is required as a cofactor.

The protein resides in the membrane. Probable zinc protease. The sequence is that of Disintegrin and metalloproteinase domain-containing protein B (ADM-B) from Arthroderma benhamiae (strain ATCC MYA-4681 / CBS 112371) (Trichophyton mentagrophytes).